Consider the following 688-residue polypeptide: Sodium channel and clathrin linker 1 (688 aa).

The residue at position 2 (Ala2) is an N-acetylalanine. Coiled coils occupy residues 59 to 108 and 152 to 673; these read LIAE…AVEK and QTAS…SVIT. Ser681 carries the post-translational modification Phosphoserine.

Interacts with SCN10A and clathrin. Identified in a complex containing SCN10A, clathrin and SCLT1.

Its subcellular location is the cytoplasm. The protein resides in the cytoskeleton. It is found in the microtubule organizing center. It localises to the centrosome. The protein localises to the centriole. Adapter protein that links SCN10A to clathrin. Regulates SCN10A channel activity, possibly by promoting channel internalization. The protein is Sodium channel and clathrin linker 1 (Sclt1) of Mus musculus (Mouse).